A 418-amino-acid chain; its full sequence is Serine hydroxymethyltransferase (418 aa).

Residues L121 and 125–127 (GHL) each bind (6S)-5,6,7,8-tetrahydrofolate. K230 bears the N6-(pyridoxal phosphate)lysine mark. 356-358 (SPF) lines the (6S)-5,6,7,8-tetrahydrofolate pocket.

The protein belongs to the SHMT family. Homodimer. Pyridoxal 5'-phosphate is required as a cofactor.

The protein resides in the cytoplasm. It catalyses the reaction (6R)-5,10-methylene-5,6,7,8-tetrahydrofolate + glycine + H2O = (6S)-5,6,7,8-tetrahydrofolate + L-serine. It participates in one-carbon metabolism; tetrahydrofolate interconversion. It functions in the pathway amino-acid biosynthesis; glycine biosynthesis; glycine from L-serine: step 1/1. In terms of biological role, catalyzes the reversible interconversion of serine and glycine with tetrahydrofolate (THF) serving as the one-carbon carrier. This reaction serves as the major source of one-carbon groups required for the biosynthesis of purines, thymidylate, methionine, and other important biomolecules. Also exhibits THF-independent aldolase activity toward beta-hydroxyamino acids, producing glycine and aldehydes, via a retro-aldol mechanism. This chain is Serine hydroxymethyltransferase, found in Pseudoalteromonas atlantica (strain T6c / ATCC BAA-1087).